The sequence spans 393 residues: Putative competence-damage inducible protein (393 aa).

It belongs to the CinA family.

This Streptococcus suis (strain 98HAH33) protein is Putative competence-damage inducible protein.